Here is a 242-residue protein sequence, read N- to C-terminus: MLPRILYMNPIEHVIRQAPAIEAKLGYTFKDPQLLVLAFVHRSFINENREVNQHNERLEFLGDSVLGMLISDYLYCKLPKTPEGQLSYLRSRLVEASSCVHYIQSLDLSGYLLLGKGERMNDGRGRESILADLFEAIIGAIYLDGGLQAAKDFLFKNFHQHIEIILATPLRNWKALLQDYCQKNYQQTPLYQVLHESGPDHSKVFQISVWIQDRELGRGKGTSKKEAQQAAAADALSRVELP.

In terms of domain architecture, RNase III spans 18-146; the sequence is APAIEAKLGY…IIGAIYLDGG (129 aa). Residue Glu59 coordinates Mg(2+). Residue Asp63 is part of the active site. 2 residues coordinate Mg(2+): Asp132 and Glu135. Glu135 is a catalytic residue. Residues 172 to 241 enclose the DRBM domain; sequence NWKALLQDYC…AADALSRVEL (70 aa). The span at 218–227 shows a compositional bias: basic and acidic residues; the sequence is RGKGTSKKEA. The interval 218 to 242 is disordered; sequence RGKGTSKKEAQQAAAADALSRVELP.

It belongs to the ribonuclease III family. As to quaternary structure, homodimer. It depends on Mg(2+) as a cofactor.

Its subcellular location is the cytoplasm. It carries out the reaction Endonucleolytic cleavage to 5'-phosphomonoester.. Digests double-stranded RNA. Involved in the processing of primary rRNA transcript to yield the immediate precursors to the large and small rRNAs (23S and 16S). Processes some mRNAs, and tRNAs when they are encoded in the rRNA operon. Processes pre-crRNA and tracrRNA of type II CRISPR loci if present in the organism. The chain is Ribonuclease 3 from Protochlamydia amoebophila (strain UWE25).